A 64-amino-acid chain; its full sequence is DNA gyrase inhibitor YacG (64 aa).

Positions 9, 12, 28, and 32 each coordinate Zn(2+). A disordered region spans residues 42–64 (DEENAIPGAPDMSDSDGWSEEQY). A compositionally biased stretch (acidic residues) spans 54–64 (SDSDGWSEEQY).

It belongs to the DNA gyrase inhibitor YacG family. Interacts with GyrB. The cofactor is Zn(2+).

Inhibits all the catalytic activities of DNA gyrase by preventing its interaction with DNA. Acts by binding directly to the C-terminal domain of GyrB, which probably disrupts DNA binding by the gyrase. This is DNA gyrase inhibitor YacG from Vibrio vulnificus (strain CMCP6).